Consider the following 244-residue polypeptide: tRNA1(Val) (adenine(37)-N6)-methyltransferase (244 aa).

Belongs to the methyltransferase superfamily. tRNA (adenine-N(6)-)-methyltransferase family.

The protein resides in the cytoplasm. It catalyses the reaction adenosine(37) in tRNA1(Val) + S-adenosyl-L-methionine = N(6)-methyladenosine(37) in tRNA1(Val) + S-adenosyl-L-homocysteine + H(+). In terms of biological role, specifically methylates the adenine in position 37 of tRNA(1)(Val) (anticodon cmo5UAC). In Photorhabdus laumondii subsp. laumondii (strain DSM 15139 / CIP 105565 / TT01) (Photorhabdus luminescens subsp. laumondii), this protein is tRNA1(Val) (adenine(37)-N6)-methyltransferase.